The chain runs to 411 residues: MRCEILSVGTELLLGDILNTNAQYLSRRLADLGIPVYFHTTVGDNPERLKKALEIAFSRSDMVIATGGLGPTQDDLTKEISAEFFNKKLVLHEESLKRIKEFFERRGLNLTEGNIKQAYIIEGSRVIPNDWGTAPGIILEEGGKILILLPGPPKEMIPMFETYVVPYLSTFSSGIIYSKVLRVCGIGESFMEEKVKDLIKSQTNPTIAPYAKEGEAILRITARAKSKEEAEKMIEGVVKEIRKRLGDYIYGEGETSLEEVVVNLLLEKGLTISVAESCTGGLISARLVNVPGVSKVFKGSIIAYDNEVKIKELNVPEEIFKEYGAVSSQCAMKMAEGIAKKMGTDVGLSATGIAGPEGGTLEKPIGLVYIGLYIRGEMSYKELRLSGDRNRIRLYTTINGLDLLRRGLLNL.

It belongs to the CinA family.

This Dictyoglomus turgidum (strain DSM 6724 / Z-1310) protein is CinA-like protein.